Consider the following 461-residue polypeptide: L-seryl-tRNA(Sec) selenium transferase (461 aa).

Lys-294 is modified (N6-(pyridoxal phosphate)lysine).

This sequence belongs to the SelA family. Requires pyridoxal 5'-phosphate as cofactor.

The protein localises to the cytoplasm. The catalysed reaction is L-seryl-tRNA(Sec) + selenophosphate + H(+) = L-selenocysteinyl-tRNA(Sec) + phosphate. Its pathway is aminoacyl-tRNA biosynthesis; selenocysteinyl-tRNA(Sec) biosynthesis; selenocysteinyl-tRNA(Sec) from L-seryl-tRNA(Sec) (bacterial route): step 1/1. Functionally, converts seryl-tRNA(Sec) to selenocysteinyl-tRNA(Sec) required for selenoprotein biosynthesis. The protein is L-seryl-tRNA(Sec) selenium transferase of Actinobacillus pleuropneumoniae serotype 7 (strain AP76).